Consider the following 167-residue polypeptide: L-alanine exporter AlaE (167 aa).

4 helical membrane-spanning segments follow: residues 25–45 (GTEF…TGII), 50–70 (IAGM…ALMI), 105–125 (FQVP…GGLV), and 129–149 (LGAA…LNWV).

It belongs to the AlaE exporter family.

The protein resides in the cell inner membrane. Functionally, exports L-alanine. The chain is L-alanine exporter AlaE from Pantoea sp. (strain At-9b).